Consider the following 639-residue polypeptide: Ubiquitin-like modifier-activating enzyme ATG7 (639 aa).

The GXGXXG motif signature appears at 322 to 327; it reads GAGTLG. The active-site Glycyl thioester intermediate is cysteine 502.

Belongs to the ATG7 family. In terms of assembly, homodimer.

Its subcellular location is the cytoplasm. The protein resides in the preautophagosomal structure. Its function is as follows. E1-like activating enzyme involved in the 2 ubiquitin-like systems required for cytoplasm to vacuole transport (Cvt) and autophagy. Activates ATG12 for its conjugation with ATG5 and ATG8 for its conjugation with phosphatidylethanolamine. Both systems are needed for the ATG8 association to Cvt vesicles and autophagosomes membranes. Autophagy is essential for maintenance of amino acid levels and protein synthesis under nitrogen starvation. Required for selective autophagic degradation of the nucleus (nucleophagy) as well as for mitophagy which contributes to regulate mitochondrial quantity and quality by eliminating the mitochondria to a basal level to fulfill cellular energy requirements and preventing excess ROS production. Plays a role in the regulation of filamentous growth and chronological longevity. The protein is Ubiquitin-like modifier-activating enzyme ATG7 (APG7) of Candida albicans (strain SC5314 / ATCC MYA-2876) (Yeast).